The sequence spans 256 residues: Triosephosphate isomerase (256 aa).

Position 9–11 (9–11 (NWK)) interacts with substrate. His97 (electrophile) is an active-site residue. The Proton acceptor role is filled by Glu169. Substrate contacts are provided by residues Gly175, Ser214, and 235–236 (GG).

The protein belongs to the triosephosphate isomerase family. In terms of assembly, homodimer.

The protein localises to the cytoplasm. It carries out the reaction D-glyceraldehyde 3-phosphate = dihydroxyacetone phosphate. It participates in carbohydrate biosynthesis; gluconeogenesis. Its pathway is carbohydrate degradation; glycolysis; D-glyceraldehyde 3-phosphate from glycerone phosphate: step 1/1. Involved in the gluconeogenesis. Catalyzes stereospecifically the conversion of dihydroxyacetone phosphate (DHAP) to D-glyceraldehyde-3-phosphate (G3P). This is Triosephosphate isomerase from Moritella marina (Vibrio marinus).